A 552-amino-acid chain; its full sequence is Harmonin (552 aa).

The segment at 1–86 is N-terminal domain; sequence MDRKVAREFR…LTPRRSRKLK (86 aa). PDZ domains are found at residues 87-169 and 211-293; these read EVRL…HIGL and KVFI…AAAG. The tract at residues 194 to 552 is mediates interaction with MYO7B; sequence GVRGSLGSPG…KEYDDELTFF (359 aa). Position 219 is a phosphoserine (Ser219). A coiled-coil region spans residues 310 to 377; it reads RELQRQELLM…EKFKKQWEED (68 aa). The interval 401–427 is disordered; it reads KPKYDQGVEPELEPADDLDGGTEEQGE. Positions 408-427 are enriched in acidic residues; it reads VEPELEPADDLDGGTEEQGE. The PDZ 3 domain maps to 452–537; sequence DVRLLRIKKE…QGGDWIDLVV (86 aa).

In terms of assembly, part of the IMAC/intermicrovillar adhesion complex/intermicrovillar tip-link complex composed of ANKS4B, MYO7B, USH1C, CDHR2 and CDHR5. Part of a complex composed of USH1C, USH1G and MYO7A. Interacts with F-actin. Interacts with USH2A. Interacts with SLC4A7. Interacts (via PDZ1 domain) with the C-terminus of USHBP1. Interacts (via N-terminus and PDZ 2 domain) with CDH23. Interacts with USH1G. Interacts with MYO7B. Interacts with CDHR2 and CDHR5; may mediate their interaction with MYO7B at the microvilli tip. Interacts (via PDZ 1 domain) with ANKS4B. Interacts (via PDZ 1 domain) with DOCK4. As to expression, expressed in small intestine, colon, kidney, eye and weakly in pancreas. Expressed also in vestibule of the inner ear.

It localises to the cytoplasm. The protein localises to the cytosol. Its subcellular location is the cytoskeleton. It is found in the cell projection. The protein resides in the microvillus. Anchoring/scaffolding protein that is a part of the functional network formed by USH1C, USH1G, CDH23 and MYO7A that mediates mechanotransduction in cochlear hair cells. Required for normal development and maintenance of cochlear hair cell bundles. As part of the intermicrovillar adhesion complex/IMAC plays a role in brush border differentiation, controlling microvilli organization and length. Probably plays a central regulatory role in the assembly of the complex, recruiting CDHR2, CDHR5 and MYO7B to the microvilli tips. In Homo sapiens (Human), this protein is Harmonin (USH1C).